A 305-amino-acid polypeptide reads, in one-letter code: MAISAAQVKELRERTGAGMMDCKKALQEANGDMDKAIEILRKKGIAKAAKKADRVASEGTIAVQVSEDYKCATIVEVNSETDFVAQNENFKSLVEKVKGHIAQSAVESVEELYKTPIDNVIFEEYMKAEIAKIGENIVVRRFDKICVEGPGVVNGYLHMGGKIGVIVAASCDKEDVCASLKDLLKDVAMHIAAMNPRYLDEASIPAEVIEKEKEIAAAQLEKEGKPANIIEKIIPGKIKKFVEENTLLGQKFVKDDKKSVKQVIDEAAKAAGGSAKIIGFIRYELGEGIEKKEEDFAAEVAAQMK.

The tract at residues T81–V84 is involved in Mg(2+) ion dislocation from EF-Tu.

It belongs to the EF-Ts family.

The protein localises to the cytoplasm. Associates with the EF-Tu.GDP complex and induces the exchange of GDP to GTP. It remains bound to the aminoacyl-tRNA.EF-Tu.GTP complex up to the GTP hydrolysis stage on the ribosome. In Nitratiruptor sp. (strain SB155-2), this protein is Elongation factor Ts.